A 234-amino-acid polypeptide reads, in one-letter code: Ribosomal RNA large subunit methyltransferase E (234 aa).

Residues 1-37 (MSDDDRRRWKGPGPERQDSGRRSTERKVIARNARTES) form a disordered region. Residues glycine 91, tryptophan 93, aspartate 109, aspartate 125, and aspartate 149 each contribute to the S-adenosyl-L-methionine site. Residue lysine 189 is the Proton acceptor of the active site.

The protein belongs to the class I-like SAM-binding methyltransferase superfamily. RNA methyltransferase RlmE family.

Its subcellular location is the cytoplasm. It catalyses the reaction uridine(2552) in 23S rRNA + S-adenosyl-L-methionine = 2'-O-methyluridine(2552) in 23S rRNA + S-adenosyl-L-homocysteine + H(+). Specifically methylates the uridine in position 2552 of 23S rRNA at the 2'-O position of the ribose in the fully assembled 50S ribosomal subunit. The sequence is that of Ribosomal RNA large subunit methyltransferase E from Hyphomonas neptunium (strain ATCC 15444).